A 245-amino-acid chain; its full sequence is Probable phosphatase Teth514_1060 (245 aa).

Positions 8, 10, 16, 41, 74, 102, 133, 194, and 196 each coordinate Zn(2+).

This sequence belongs to the PHP family. Zn(2+) serves as cofactor.

The chain is Probable phosphatase Teth514_1060 from Thermoanaerobacter sp. (strain X514).